Here is a 336-residue protein sequence, read N- to C-terminus: MATIKDVARLAGVSTTTVSHVINKTRFVAETTQEKVMEAVKQLNYAPSAVARSLKCNTTRTIGMLVTQSTNLFFSEVIDGVESYCYRQGYTLILCNTGGIYEKQRDYIRMLAEKRVDGILVMCSDLTQELQDMLDAHKDIPKVVMDWGPETSHADKIIDNSEEGGYLATKYLTDRGHTEIACLSGHFVKAACQERIQGFRRAMAEAKLTVNEDWILEGNFECDTAVLAADKIIAMDKRPTAVFCFNDTMALGLMSRLQQKGIRIPEDMSVIGYDNIELAEYFSPPLTTVHQPKRRVGKNAFEILLERIKDKEHERRIFEMHPEIVERDTVKDLTKS.

Residues Ala-2–Cys-56 enclose the HTH lacI-type domain. The segment at residues Ile-4 to Asn-23 is a DNA-binding region (H-T-H motif). The DNA-binding element occupies Ser-48–Cys-56. Hypoxanthine-binding residues include Phe-73, Lys-189, Phe-220, and Asp-274.

Homodimer.

Its pathway is purine metabolism; purine nucleotide biosynthesis [regulation]. In terms of biological role, is the main repressor of the genes involved in the de novo synthesis of purine nucleotides, regulating purB, purC, purEK, purF, purHD, purL, purMN and guaBA expression. PurR is allosterically activated to bind its cognate DNA by binding the purine corepressors, hypoxanthine or guanine, thereby effecting transcription repression. This chain is HTH-type transcriptional repressor PurR, found in Vibrio cholerae serotype O1 (strain ATCC 39315 / El Tor Inaba N16961).